The sequence spans 245 residues: 1-(5-phosphoribosyl)-5-[(5-phosphoribosylamino)methylideneamino] imidazole-4-carboxamide isomerase (245 aa).

The active-site Proton acceptor is D8. Residue D131 is the Proton donor of the active site.

This sequence belongs to the HisA/HisF family.

The protein localises to the cytoplasm. The catalysed reaction is 1-(5-phospho-beta-D-ribosyl)-5-[(5-phospho-beta-D-ribosylamino)methylideneamino]imidazole-4-carboxamide = 5-[(5-phospho-1-deoxy-D-ribulos-1-ylimino)methylamino]-1-(5-phospho-beta-D-ribosyl)imidazole-4-carboxamide. The protein operates within amino-acid biosynthesis; L-histidine biosynthesis; L-histidine from 5-phospho-alpha-D-ribose 1-diphosphate: step 4/9. The polypeptide is 1-(5-phosphoribosyl)-5-[(5-phosphoribosylamino)methylideneamino] imidazole-4-carboxamide isomerase (Verminephrobacter eiseniae (strain EF01-2)).